The primary structure comprises 142 residues: Large ribosomal subunit protein uL11 (142 aa).

This sequence belongs to the universal ribosomal protein uL11 family. As to quaternary structure, part of the ribosomal stalk of the 50S ribosomal subunit. Interacts with L10 and the large rRNA to form the base of the stalk. L10 forms an elongated spine to which L12 dimers bind in a sequential fashion forming a multimeric L10(L12)X complex. Post-translationally, one or more lysine residues are methylated.

Its function is as follows. Forms part of the ribosomal stalk which helps the ribosome interact with GTP-bound translation factors. In Aeromonas hydrophila subsp. hydrophila (strain ATCC 7966 / DSM 30187 / BCRC 13018 / CCUG 14551 / JCM 1027 / KCTC 2358 / NCIMB 9240 / NCTC 8049), this protein is Large ribosomal subunit protein uL11.